Consider the following 338-residue polypeptide: Glyceraldehyde-3-phosphate dehydrogenase (338 aa).

NAD(+)-binding positions include 11–12 (TI) and Gly111. Residue 140–142 (SCN) participates in D-glyceraldehyde 3-phosphate binding. The active-site Nucleophile is Cys141. Arg169 contributes to the NAD(+) binding site. A D-glyceraldehyde 3-phosphate-binding site is contributed by 195-196 (HG). NAD(+) is bound at residue Gln302.

Belongs to the glyceraldehyde-3-phosphate dehydrogenase family. In terms of assembly, homotetramer.

It localises to the cytoplasm. It catalyses the reaction D-glyceraldehyde 3-phosphate + phosphate + NADP(+) = (2R)-3-phospho-glyceroyl phosphate + NADPH + H(+). The catalysed reaction is D-glyceraldehyde 3-phosphate + phosphate + NAD(+) = (2R)-3-phospho-glyceroyl phosphate + NADH + H(+). It functions in the pathway carbohydrate degradation; glycolysis; pyruvate from D-glyceraldehyde 3-phosphate: step 1/5. The polypeptide is Glyceraldehyde-3-phosphate dehydrogenase (gap) (Methanobacterium bryantii).